The primary structure comprises 658 residues: Threonine--tRNA ligase (658 aa).

Residues 1–61 enclose the TGS domain; sequence MSDVRVIIQR…RDGESVEPVE (61 aa). The tract at residues 259–554 is catalytic; the sequence is DHRKLGNELD…LLEHYAGAFP (296 aa). Zn(2+) contacts are provided by C353, H404, and H531.

The protein belongs to the class-II aminoacyl-tRNA synthetase family. As to quaternary structure, homodimer. It depends on Zn(2+) as a cofactor.

It is found in the cytoplasm. The catalysed reaction is tRNA(Thr) + L-threonine + ATP = L-threonyl-tRNA(Thr) + AMP + diphosphate + H(+). In terms of biological role, catalyzes the attachment of threonine to tRNA(Thr) in a two-step reaction: L-threonine is first activated by ATP to form Thr-AMP and then transferred to the acceptor end of tRNA(Thr). Also edits incorrectly charged L-seryl-tRNA(Thr). This chain is Threonine--tRNA ligase, found in Streptomyces griseus subsp. griseus (strain JCM 4626 / CBS 651.72 / NBRC 13350 / KCC S-0626 / ISP 5235).